The chain runs to 338 residues: Purple acid phosphatase 17 (338 aa).

The N-terminal stretch at 1 to 31 is a signal peptide; that stretch reads MNSGRRSLMSATASLSLLLCIFTTFVVVSNG. Aspartate 53 contributes to the Fe cation binding site. Asparagine 61 carries N-linked (GlcNAc...) asparagine glycosylation. Residues aspartate 86 and tyrosine 89 each coordinate Fe cation. Aspartate 86 contributes to the Zn(2+) binding site. Zn(2+)-binding residues include asparagine 124 and histidine 218. Histidine 227 functions as the Proton donor in the catalytic mechanism. Histidine 253 contributes to the Zn(2+) binding site. A substrate-binding site is contributed by 253–255; it reads HDH. Histidine 255 is a binding site for Fe cation.

It belongs to the metallophosphoesterase superfamily. Purple acid phosphatase family. As to quaternary structure, homodimer. Fe cation is required as a cofactor. Zn(2+) serves as cofactor. Expressed in roots, stems, leaves, flowers and siliques.

It is found in the secreted. The catalysed reaction is a phosphate monoester + H2O = an alcohol + phosphate. It catalyses the reaction 2 a phenolic donor + H2O2 = 2 a phenolic radical donor + 2 H2O. Inhibited by phosphate and molybdate. In terms of biological role, metallo-phosphoesterase involved in phosphate metabolism. Has a peroxidase activity. The polypeptide is Purple acid phosphatase 17 (PAP17) (Arabidopsis thaliana (Mouse-ear cress)).